Here is a 273-residue protein sequence, read N- to C-terminus: 4-hydroxy-tetrahydrodipicolinate reductase (273 aa).

Residues 12–17 and E38 contribute to the NAD(+) site; that span reads GAGGRM. R39 serves as a coordination point for NADP(+). NAD(+)-binding positions include 102 to 104 and 126 to 129; these read GTT and AANF. H159 acts as the Proton donor/acceptor in catalysis. H160 serves as a coordination point for (S)-2,3,4,5-tetrahydrodipicolinate. The active-site Proton donor is the K163. 169 to 170 lines the (S)-2,3,4,5-tetrahydrodipicolinate pocket; sequence GT.

The protein belongs to the DapB family. As to quaternary structure, homotetramer.

It is found in the cytoplasm. It carries out the reaction (S)-2,3,4,5-tetrahydrodipicolinate + NAD(+) + H2O = (2S,4S)-4-hydroxy-2,3,4,5-tetrahydrodipicolinate + NADH + H(+). It catalyses the reaction (S)-2,3,4,5-tetrahydrodipicolinate + NADP(+) + H2O = (2S,4S)-4-hydroxy-2,3,4,5-tetrahydrodipicolinate + NADPH + H(+). It participates in amino-acid biosynthesis; L-lysine biosynthesis via DAP pathway; (S)-tetrahydrodipicolinate from L-aspartate: step 4/4. Functionally, catalyzes the conversion of 4-hydroxy-tetrahydrodipicolinate (HTPA) to tetrahydrodipicolinate. In Shigella boydii serotype 4 (strain Sb227), this protein is 4-hydroxy-tetrahydrodipicolinate reductase.